Here is an 84-residue protein sequence, read N- to C-terminus: Putative regulatory protein Dde_2720 (84 aa).

This sequence belongs to the RemA family.

In Oleidesulfovibrio alaskensis (strain ATCC BAA-1058 / DSM 17464 / G20) (Desulfovibrio alaskensis), this protein is Putative regulatory protein Dde_2720.